Here is a 310-residue protein sequence, read N- to C-terminus: Mitochondrial 2-oxodicarboxylate carrier 1 (310 aa).

Transmembrane regions (helical) follow at residues 9–29, 78–97, 126–146, 179–199, 219–239, and 281–301; these read LPFI…LLVM, SHLY…KRAI, IYSG…FELV, GLEA…GIIF, LIAG…FDVV, and MRLA…MDFF. Solcar repeat units follow at residues 9–108, 120–204, and 213–300; these read LPFI…FQTF, MTQK…IRKL, and EKTR…VMDF.

This sequence belongs to the mitochondrial carrier (TC 2.A.29) family.

Its subcellular location is the mitochondrion inner membrane. Its function is as follows. Transports C5-C7 oxodicarboxylates across the inner membranes of mitochondria. Can transport 2-oxoadipate, 2-oxoglutarate, adipate, glutarate, 2-oxopimelate, oxaloacetate, citrate and malate. The main physiological role is probably to supply 2-oxoadipate and 2-oxoglutarate from the mitochondrial matrix to the cytosol where they are used in the biosynthesis of lysine and glutamate, respectively, and in lysine catabolism. The protein is Mitochondrial 2-oxodicarboxylate carrier 1 (ODC1) of Saccharomyces cerevisiae (strain ATCC 204508 / S288c) (Baker's yeast).